A 354-amino-acid chain; its full sequence is Type II methylase M.HgiDII (354 aa).

An SAM-dependent MTase C5-type domain is found at 3-344 (GAVIDLFCGV…KSIKRFLEGL (342 aa)). The active site involves C79.

It belongs to the class I-like SAM-binding methyltransferase superfamily. C5-methyltransferase family.

The enzyme catalyses a 2'-deoxycytidine in DNA + S-adenosyl-L-methionine = a 5-methyl-2'-deoxycytidine in DNA + S-adenosyl-L-homocysteine + H(+). Its function is as follows. A methylase that recognizes the double-stranded sequence 5'-GTCGAC-3', methylates C-? on both strands and protects the DNA from cleavage by the HgiDII endonuclease. This Herpetosiphon aurantiacus (Herpetosiphon giganteus) protein is Type II methylase M.HgiDII.